A 334-amino-acid polypeptide reads, in one-letter code: Mitochondrial glycine transporter (334 aa).

3 Solcar repeats span residues 10–94 (SKSS…IRQA), 127–211 (LSNT…FKRR), and 234–318 (RAAA…LIMR). 6 helical membrane-spanning segments follow: residues 16–41 (FVAG…TRVQ), 69–95 (GTVP…RQAA), 133–158 (LLAG…VRYE), 186–209 (GFGA…EQFK), 238–264 (VNFS…KTRI), and 293–311 (GLGL…AWTL).

It belongs to the mitochondrial carrier (TC 2.A.29) family. SLC25A38 subfamily.

It is found in the mitochondrion inner membrane. It catalyses the reaction glycine(in) = glycine(out). Functionally, mitochondrial glycine transporter that imports glycine into the mitochondrial matrix. Plays an important role in providing glycine for the first enzymatic step in heme biosynthesis, the condensation of glycine with succinyl-CoA to produce 5-aminolevulinate (ALA) in the mitochondrial matrix. This chain is Mitochondrial glycine transporter, found in Pyricularia oryzae (strain 70-15 / ATCC MYA-4617 / FGSC 8958) (Rice blast fungus).